Here is a 1058-residue protein sequence, read N- to C-terminus: SIT4-associating protein SAP185 (1058 aa).

Residue K20 forms a Glycyl lysine isopeptide (Lys-Gly) (interchain with G-Cter in ubiquitin) linkage. Disordered stretches follow at residues 34-71 (TSTEAGKIDSNSTDESLESNSFKSEDEEEEYELPNREE), 135-202 (SEDR…ELEE), 513-556 (NSQN…TSID), 818-862 (CQEE…DQEQ), 873-892 (TKTRLNFNPDSDATEQVPGE), and 934-992 (ELSD…HDYD). Over residues 42-55 (DSNSTDESLESNSF) the composition is skewed to polar residues. Composition is skewed to basic and acidic residues over residues 135–146 (SEDRDLVRGEDK) and 153–175 (ENAKADKKNIDGTFEEKERTRSG). The span at 176–189 (EEEELENEENDSAS) shows a compositional bias: acidic residues. Residues 190–202 (EDTRVTLPHELEE) show a composition bias toward basic and acidic residues. Composition is skewed to acidic residues over residues 528–546 (ENEDDNTGDADDEVEDDTN) and 820–837 (EEEEDEGEGYVSFDEDEP). Over residues 838-861 (QEYRNGDSVRSKESNSSEGKRDQE) the composition is skewed to basic and acidic residues. Over residues 934–963 (ELSDGWESSPSNSIPKRASPSKNGMNSPMF) the composition is skewed to polar residues. Residues 967-991 (FELHSPTDEFGGHKDEILSAEGHDY) show a composition bias toward basic and acidic residues.

This sequence belongs to the SAPS family. Hyperphosphorylated in the absence of SIT4.

In terms of biological role, associates with the SIT4 phosphatase in a cell cycle dependent manner. May be directly or indirectly involved in SIT4-dependent functions in budding and in normal G1 cyclin expression. The polypeptide is SIT4-associating protein SAP185 (SAP185) (Saccharomyces cerevisiae (strain ATCC 204508 / S288c) (Baker's yeast)).